The primary structure comprises 463 residues: Fumarate hydratase class II (463 aa).

Substrate-binding positions include 97–99, 128–131, 138–140, and T186; these read SGT, HPND, and SSN. H187 functions as the Proton donor/acceptor in the catalytic mechanism. The active site involves S317. Substrate contacts are provided by residues S318 and 323–325; that span reads KVN.

Belongs to the class-II fumarase/aspartase family. Fumarase subfamily. Homotetramer.

The protein resides in the cytoplasm. It carries out the reaction (S)-malate = fumarate + H2O. Its pathway is carbohydrate metabolism; tricarboxylic acid cycle; (S)-malate from fumarate: step 1/1. In terms of biological role, involved in the TCA cycle. Catalyzes the stereospecific interconversion of fumarate to L-malate. The sequence is that of Fumarate hydratase class II from Helicobacter pylori (strain ATCC 700392 / 26695) (Campylobacter pylori).